A 133-amino-acid polypeptide reads, in one-letter code: Small ribosomal subunit protein uS8 (133 aa).

Belongs to the universal ribosomal protein uS8 family. Part of the 30S ribosomal subunit. Contacts proteins S5 and S12.

One of the primary rRNA binding proteins, it binds directly to 16S rRNA central domain where it helps coordinate assembly of the platform of the 30S subunit. The sequence is that of Small ribosomal subunit protein uS8 from Anaplasma phagocytophilum (strain HZ).